The chain runs to 432 residues: Trigger factor (432 aa).

The PPIase FKBP-type domain maps to 163–248; that stretch reads GDIAVIDFEG…LKALNKKELP (86 aa).

The protein belongs to the FKBP-type PPIase family. Tig subfamily.

Its subcellular location is the cytoplasm. The enzyme catalyses [protein]-peptidylproline (omega=180) = [protein]-peptidylproline (omega=0). Involved in protein export. Acts as a chaperone by maintaining the newly synthesized protein in an open conformation. Functions as a peptidyl-prolyl cis-trans isomerase. This chain is Trigger factor, found in Thermoanaerobacter pseudethanolicus (strain ATCC 33223 / 39E) (Clostridium thermohydrosulfuricum).